We begin with the raw amino-acid sequence, 198 residues long: Segregation and condensation protein B (198 aa).

The interval 167-198 is disordered; the sequence is PKLADPEAEDPDQSEMDLFFDRFNQSKEQEEE. Over residues 172 to 181 the composition is skewed to acidic residues; sequence PEAEDPDQSE.

The protein belongs to the ScpB family. Homodimer. Homodimerization may be required to stabilize the binding of ScpA to the Smc head domains. Component of a cohesin-like complex composed of ScpA, ScpB and the Smc homodimer, in which ScpA and ScpB bind to the head domain of Smc. The presence of the three proteins is required for the association of the complex with DNA.

Its subcellular location is the cytoplasm. Its function is as follows. Participates in chromosomal partition during cell division. May act via the formation of a condensin-like complex containing Smc and ScpA that pull DNA away from mid-cell into both cell halves. The protein is Segregation and condensation protein B of Listeria innocua serovar 6a (strain ATCC BAA-680 / CLIP 11262).